A 155-amino-acid polypeptide reads, in one-letter code: Small ribosomal subunit protein uS7cz/uS7cy (155 aa).

The protein belongs to the universal ribosomal protein uS7 family. As to quaternary structure, part of the 30S ribosomal subunit.

The protein localises to the plastid. In terms of biological role, one of the primary rRNA binding proteins, it binds directly to 16S rRNA where it nucleates assembly of the head domain of the 30S subunit. In Epifagus virginiana (Beechdrops), this protein is Small ribosomal subunit protein uS7cz/uS7cy (rps7-A).